The primary structure comprises 524 residues: Putative ATP-dependent RNA helicase R458 (524 aa).

The region spanning 125–338 is the Helicase ATP-binding domain; sequence VPELIQRKDT…NSYFRKYSPI (214 aa). 138–145 contributes to the ATP binding site; it reads FKSGTGKT. The short motif at 268–271 is the DEFD box element; that stretch reads DEFD. Positions 373 to 524 constitute a Helicase C-terminal domain; sequence IILDLLKQCR…QLPGDLSTLL (152 aa).

This sequence belongs to the DEAD box helicase family. eIF4A subfamily.

The catalysed reaction is ATP + H2O = ADP + phosphate + H(+). Putative ATP-dependent RNA helicase. In Acanthamoeba polyphaga mimivirus (APMV), this protein is Putative ATP-dependent RNA helicase R458.